The following is a 147-amino-acid chain: MARPFPIQRTSIVREAGKKWFVVDASGKVLGRLASQIAKYLMGKNEPTFFPGVDNGNYVVVINADKVLLTGKKLDKKMYYHYSGYPGGLKQLTARQLLEKHPERLIYLAVKRMLPKAALGTKYLKRLKVYASDSHPHEAQKPQPLEF.

This sequence belongs to the universal ribosomal protein uL13 family. In terms of assembly, part of the 50S ribosomal subunit.

Functionally, this protein is one of the early assembly proteins of the 50S ribosomal subunit, although it is not seen to bind rRNA by itself. It is important during the early stages of 50S assembly. This Pseudothermotoga lettingae (strain ATCC BAA-301 / DSM 14385 / NBRC 107922 / TMO) (Thermotoga lettingae) protein is Large ribosomal subunit protein uL13.